Here is a 521-residue protein sequence, read N- to C-terminus: Acetylcholine receptor subunit delta (521 aa).

An N-terminal signal peptide occupies residues 1–21 (MAWIWISLLLPILIYFPGCFS). The Extracellular portion of the chain corresponds to 22-247 (ESEEERLLNH…ITFYLIIERK (226 aa)). Residues Asn53 and Asn164 are each glycosylated (N-linked (GlcNAc...) asparagine). An intrachain disulfide couples Cys151 to Cys165. Transmembrane regions (helical) follow at residues 248-272 (PLFY…VFYL), 280-297 (MTLA…LLLI), and 314-335 (YLMF…VLNL). Over 336–475 (HFRTPSTHAI…WYRIARTVDR (140 aa)) the chain is Cytoplasmic. Position 394 is a phosphotyrosine; by Tyr-kinases (Tyr394). A helical membrane pass occupies residues 476–494 (LCLFLVTPVMIIGTLWIFL).

Belongs to the ligand-gated ion channel (TC 1.A.9) family. Acetylcholine receptor (TC 1.A.9.1) subfamily. Pentamer of two alpha chains, and one each of the beta, delta, and gamma (in immature muscle) or epsilon (in mature muscle) chains.

Its subcellular location is the postsynaptic cell membrane. The protein resides in the cell membrane. The enzyme catalyses K(+)(in) = K(+)(out). The catalysed reaction is Na(+)(in) = Na(+)(out). In terms of biological role, after binding acetylcholine, the AChR responds by an extensive change in conformation that affects all subunits and leads to opening of an ion-conducting channel across the plasma membrane. The polypeptide is Acetylcholine receptor subunit delta (chrnd) (Xenopus laevis (African clawed frog)).